We begin with the raw amino-acid sequence, 174 residues long: Transcriptional repressor NrdR (174 aa).

Residues 3 to 34 (CPFCQHSDTRVIDSRVSEDGTTIRRRRECEAC) fold into a zinc finger. The region spanning 49–139 (PTVVKSDGGR…VYRSFQDVAD (91 aa)) is the ATP-cone domain.

The protein belongs to the NrdR family. Zn(2+) is required as a cofactor.

Functionally, negatively regulates transcription of bacterial ribonucleotide reductase nrd genes and operons by binding to NrdR-boxes. The protein is Transcriptional repressor NrdR of Xanthomonas oryzae pv. oryzae (strain MAFF 311018).